A 282-amino-acid chain; its full sequence is Deoxyribonuclease-1 (282 aa).

The signal sequence occupies residues 1–22 (MRGTRLMGLLLALAGLLQLGLS). N40 carries an N-linked (GlcNAc...) asparagine glycan. E100 is an active-site residue. The cysteines at positions 123 and 126 are disulfide-linked. H156 is a catalytic residue. C195 and C231 are joined by a disulfide.

Belongs to the DNase I family. Ca(2+) serves as cofactor. Requires Mg(2+) as cofactor. Post-translationally, the only differences between the A and B forms and the C and D forms are in the compositions of the carbohydrate bound to Asn-40.

Its subcellular location is the secreted. The protein resides in the zymogen granule. It is found in the nucleus envelope. The enzyme catalyses Endonucleolytic cleavage to 5'-phosphodinucleotide and 5'-phosphooligonucleotide end-products.. Serum endocuclease secreted into body fluids by a wide variety of exocrine and endocrine organs. Expressed by non-hematopoietic tissues and preferentially cleaves protein-free DNA. Among other functions, seems to be involved in cell death by apoptosis. Binds specifically to G-actin and blocks actin polymerization. Together with DNASE1L3, plays a key role in degrading neutrophil extracellular traps (NETs). NETs are mainly composed of DNA fibers and are released by neutrophils to bind pathogens during inflammation. Degradation of intravascular NETs by DNASE1 and DNASE1L3 is required to prevent formation of clots that obstruct blood vessels and cause organ damage following inflammation. The protein is Deoxyribonuclease-1 (DNASE1) of Bos taurus (Bovine).